Here is a 124-residue protein sequence, read N- to C-terminus: 14 kDa phosphohistidine phosphatase (124 aa).

Lysine 20 lines the substrate pocket. The active-site Proton acceptor is the histidine 52. 93–95 (SMG) serves as a coordination point for substrate.

This sequence belongs to the janus family. Monomer.

It is found in the cytoplasm. The enzyme catalyses N(pros)-phospho-L-histidyl-[protein] + H2O = L-histidyl-[protein] + phosphate. It carries out the reaction N(tele)-phospho-L-histidyl-[protein] + H2O = L-histidyl-[protein] + phosphate. Exhibits phosphohistidine phosphatase activity. The sequence is that of 14 kDa phosphohistidine phosphatase (Phpt1) from Mus musculus (Mouse).